The following is a 77-amino-acid chain: MGDLSNKAEGVGGKIKEGIGEATGNESLADEGRADQTKADIKEAVSDAGDKIKDGANKVLGSFQDKDPDVEHPEAVN.

A disordered region spans residues 1–77 (MGDLSNKAEG…PDVEHPEAVN (77 aa)). 2 stretches are compositionally biased toward basic and acidic residues: residues 30–56 (DEGR…KDGA) and 64–77 (QDKD…EAVN).

It belongs to the UPF0337 (CsbD) family.

In Corynebacterium efficiens (strain DSM 44549 / YS-314 / AJ 12310 / JCM 11189 / NBRC 100395), this protein is UPF0337 protein CE0198.